The primary structure comprises 233 residues: Lactate utilization protein C (233 aa).

The protein belongs to the LutC/YkgG family.

Is involved in L-lactate degradation and allows cells to grow with lactate as the sole carbon source. In Oceanobacillus iheyensis (strain DSM 14371 / CIP 107618 / JCM 11309 / KCTC 3954 / HTE831), this protein is Lactate utilization protein C.